Consider the following 307-residue polypeptide: GTPase Era (307 aa).

The region spanning Arg7–Val181 is the Era-type G domain. Residues Gly15–Ser22 are G1. Gly15–Ser22 is a binding site for GTP. The segment at Gln41–Asn45 is G2. The interval Asp62 to Gly65 is G3. GTP-binding positions include Asp62–Ile66 and Asn130–Asp133. Positions Asn130–Asp133 are G4. Positions Val160–Ala162 are G5. The KH type-2 domain occupies Leu212–Glu290.

It belongs to the TRAFAC class TrmE-Era-EngA-EngB-Septin-like GTPase superfamily. Era GTPase family. In terms of assembly, monomer.

The protein localises to the cytoplasm. The protein resides in the cell inner membrane. Functionally, an essential GTPase that binds both GDP and GTP, with rapid nucleotide exchange. Plays a role in 16S rRNA processing and 30S ribosomal subunit biogenesis and possibly also in cell cycle regulation and energy metabolism. The protein is GTPase Era of Nitratidesulfovibrio vulgaris (strain DSM 19637 / Miyazaki F) (Desulfovibrio vulgaris).